Here is a 63-residue protein sequence, read N- to C-terminus: Large ribosomal subunit protein uL29 (63 aa).

This sequence belongs to the universal ribosomal protein uL29 family.

The chain is Large ribosomal subunit protein uL29 from Caulobacter vibrioides (strain ATCC 19089 / CIP 103742 / CB 15) (Caulobacter crescentus).